Here is a 429-residue protein sequence, read N- to C-terminus: N5-carboxyaminoimidazole ribonucleotide synthase (429 aa).

Residues lysine 117, lysine 157, 194–197 (EERV), glutamate 202, and 280–281 (NE) each bind ATP. The ATP-grasp domain maps to 121–310 (RQRLAAAGVA…QFEQHLRAVL (190 aa)). The interval 406 to 429 (RASDDAVGVPPACGGRSDEEERRL) is disordered.

Belongs to the PurK/PurT family. In terms of assembly, homodimer.

The enzyme catalyses 5-amino-1-(5-phospho-beta-D-ribosyl)imidazole + hydrogencarbonate + ATP = 5-carboxyamino-1-(5-phospho-D-ribosyl)imidazole + ADP + phosphate + 2 H(+). It participates in purine metabolism; IMP biosynthesis via de novo pathway; 5-amino-1-(5-phospho-D-ribosyl)imidazole-4-carboxylate from 5-amino-1-(5-phospho-D-ribosyl)imidazole (N5-CAIR route): step 1/2. Its function is as follows. Catalyzes the ATP-dependent conversion of 5-aminoimidazole ribonucleotide (AIR) and HCO(3)(-) to N5-carboxyaminoimidazole ribonucleotide (N5-CAIR). The polypeptide is N5-carboxyaminoimidazole ribonucleotide synthase (Mycobacterium bovis (strain ATCC BAA-935 / AF2122/97)).